The sequence spans 440 residues: Enolase (440 aa).

Residues H159 and E168 each contribute to the substrate site. E211 (proton donor) is an active-site residue. D245, E296, and D321 together coordinate Mg(2+). Substrate contacts are provided by E296 and D321. K346 acts as the Proton acceptor in catalysis. Substrate is bound by residues 373 to 376 (SHRS) and K397.

This sequence belongs to the enolase family. In terms of assembly, homodimer. Mg(2+) is required as a cofactor.

Its subcellular location is the cytoplasm. The enzyme catalyses (2R)-2-phosphoglycerate = phosphoenolpyruvate + H2O. It functions in the pathway carbohydrate degradation; glycolysis; pyruvate from D-glyceraldehyde 3-phosphate: step 4/5. The polypeptide is Enolase (eno-1) (Tuber borchii (White truffle)).